The chain runs to 435 residues: Protein PRRC1 (435 aa).

2 disordered regions span residues 1–54 (MMEE…DFSS) and 101–165 (AAGP…IVTN). Residues 12-28 (PATPPPPSTVVASPPPL) show a composition bias toward pro residues. Polar residues-rich tracts occupy residues 30–45 (SGATRPQTVPSPSGIS) and 144–157 (TPQTPLMPSFSSAS). The segment at 296 to 389 (VKGAQERIDS…SGLLVTVGEV (94 aa)) is required for interaction with PRKAR1A.

This sequence belongs to the PRRC1 family. In terms of assembly, interacts with PRKAR1A; resulting in PKA activation. As to expression, expressed in the brain, heart, testis and ovary.

Its subcellular location is the golgi apparatus. The protein resides in the cytoplasm. In terms of biological role, acts as a regulator of the protein kinase A (PKA) during embryonic development. The polypeptide is Protein PRRC1 (prrc1) (Danio rerio (Zebrafish)).